Consider the following 165-residue polypeptide: SsrA-binding protein (165 aa).

The segment at 141-165 (EDRRHAIAERETKREMDREISRRRR) is disordered.

The protein belongs to the SmpB family.

The protein localises to the cytoplasm. Its function is as follows. Required for rescue of stalled ribosomes mediated by trans-translation. Binds to transfer-messenger RNA (tmRNA), required for stable association of tmRNA with ribosomes. tmRNA and SmpB together mimic tRNA shape, replacing the anticodon stem-loop with SmpB. tmRNA is encoded by the ssrA gene; the 2 termini fold to resemble tRNA(Ala) and it encodes a 'tag peptide', a short internal open reading frame. During trans-translation Ala-aminoacylated tmRNA acts like a tRNA, entering the A-site of stalled ribosomes, displacing the stalled mRNA. The ribosome then switches to translate the ORF on the tmRNA; the nascent peptide is terminated with the 'tag peptide' encoded by the tmRNA and targeted for degradation. The ribosome is freed to recommence translation, which seems to be the essential function of trans-translation. The sequence is that of SsrA-binding protein from Anaeromyxobacter sp. (strain Fw109-5).